Consider the following 386-residue polypeptide: Chaperone protein DnaJ (386 aa).

Residues 5-70 (DYYEVLGVER…QKRAAYDRYG (66 aa)) enclose the J domain. The CR-type zinc finger occupies 138–216 (GKDETIHVPQ…CGGHGQVKEE (79 aa)). Positions 151, 154, 168, 171, 190, 193, 204, and 207 each coordinate Zn(2+). CXXCXGXG motif repeat units lie at residues 151–158 (CRPCEGTG), 168–175 (CETCGGHG), 190–197 (CHICQGRG), and 204–211 (CKTCGGHG).

It belongs to the DnaJ family. Homodimer. Zn(2+) is required as a cofactor.

Its subcellular location is the cytoplasm. Functionally, participates actively in the response to hyperosmotic and heat shock by preventing the aggregation of stress-denatured proteins and by disaggregating proteins, also in an autonomous, DnaK-independent fashion. Unfolded proteins bind initially to DnaJ; upon interaction with the DnaJ-bound protein, DnaK hydrolyzes its bound ATP, resulting in the formation of a stable complex. GrpE releases ADP from DnaK; ATP binding to DnaK triggers the release of the substrate protein, thus completing the reaction cycle. Several rounds of ATP-dependent interactions between DnaJ, DnaK and GrpE are required for fully efficient folding. Also involved, together with DnaK and GrpE, in the DNA replication of plasmids through activation of initiation proteins. The polypeptide is Chaperone protein DnaJ (Hyphomonas neptunium (strain ATCC 15444)).